A 469-amino-acid polypeptide reads, in one-letter code: Citrate synthase, mitochondrial (469 aa).

A mitochondrion-targeting transit peptide spans 1–28; that stretch reads MAFFRTVTKLRSRLGQPPSLRDSVRCLQ. Catalysis depends on residues H304, H350, and D405.

The protein belongs to the citrate synthase family. In terms of assembly, homodimer.

It is found in the mitochondrion matrix. It carries out the reaction oxaloacetate + acetyl-CoA + H2O = citrate + CoA + H(+). The protein operates within carbohydrate metabolism; tricarboxylic acid cycle; isocitrate from oxaloacetate: step 1/2. In Fragaria ananassa (Strawberry), this protein is Citrate synthase, mitochondrial (MCSI).